The chain runs to 423 residues: Glutamate--cysteine ligase EgtA (423 aa).

This sequence belongs to the glutamate--cysteine ligase type 2 family. EgtA subfamily.

The enzyme catalyses L-cysteine + L-glutamate + ATP = gamma-L-glutamyl-L-cysteine + ADP + phosphate + H(+). It functions in the pathway amino-acid biosynthesis; ergothioneine biosynthesis. Its function is as follows. Catalyzes the synthesis of gamma-glutamylcysteine (gamma-GC). This compound is used as substrate for the biosynthesis of the low-molecular thiol compound ergothioneine. This chain is Glutamate--cysteine ligase EgtA, found in Mycolicibacterium smegmatis (strain ATCC 700084 / mc(2)155) (Mycobacterium smegmatis).